The sequence spans 619 residues: Transcription factor 7-like 2 (619 aa).

Over residues 1–11 the composition is skewed to gly residues; that stretch reads MPQLNGGGGDD. Positions 1-53 are CTNNB1-binding; that stretch reads MPQLNGGGGDDLGANDELISFKDEGEQEEKSSENSSAERDLADVKSSLVNESE. The segment at 1–96 is disordered; that stretch reads MPQLNGGGGD…AKRQDGGLFK (96 aa). Positions 19 to 43 are enriched in basic and acidic residues; sequence ISFKDEGEQEEKSSENSSAERDLAD. Lys22 participates in a covalent cross-link: Glycyl lysine isopeptide (Lys-Gly) (interchain with G-Cter in SUMO2). Residues 47–57 show a composition bias toward polar residues; that stretch reads SLVNESETNQN. Basic and acidic residues predominate over residues 63–91; the sequence is EAERRPPPRSESFRDKSRESLEEAAKRQD. Phosphothreonine; by NLK is present on residues Thr201 and Thr212. Residues 201-395 form a mediates interaction with MAD2L2 region; it reads TPLITYSNEH…RRWHALSREE (195 aa). The span at 318-328 shows a compositional bias: polar residues; it reads TVKQESSQSDV. Disordered regions lie at residues 318-350, 420-441, 496-547, and 574-619; these read TVKQESSQSDVGSLHSSKHQDSKKEEEKKKPHI, RDNYGKKKKRKRDKQPGETNEH, CLSP…AHLS, and DLPP…KSLE. Lys320 participates in a covalent cross-link: Glycyl lysine isopeptide (Lys-Gly) (interchain with G-Cter in SUMO). Residues 335-346 show a composition bias toward basic and acidic residues; that stretch reads KHQDSKKEEEKK. A DNA-binding region (HMG box) is located at residues 350–418; it reads IKKPLNAFML…LHMQLYPGWS (69 aa). Positions 425-430 match the Nuclear localization signal motif; it reads KKKKRK. Positions 459–505 are promoter-specific activation domain; the sequence is SAPKKCRARFGLDQQNNWCGPCRRKKKCVRYIQGEGSCLSPPSSDGS. Positions 496–508 are enriched in low complexity; it reads CLSPPSSDGSLLD. Residue Lys539 forms a Glycyl lysine isopeptide (Lys-Gly) (interchain with G-Cter in SUMO2) linkage. The span at 574–603 shows a compositional bias: low complexity; the sequence is DLPPAALQPAAPSSSIAQPSTSSLHSHSSL. Over residues 604-619 the composition is skewed to polar residues; that stretch reads AGTQPQPLSLVTKSLE.

Belongs to the TCF/LEF family. In terms of assembly, interacts with TGFB1I1. Interacts with CTNNB1 (via the armadillo repeat); forms stable transcription complex. Interacts with EP300. Interacts with NLK. Interacts with CCDC85B (probably through the HMG box); prevents interaction with CTNNB1. Interacts with TNIK. Interacts with MAD2L2; prevents TCF7L2/TCF4 binding to promZIPK/DAPK3oters, negatively modulating its transcriptional activity. Interacts with ZIPK/DAPK3. Interacts with XIAP/BIRC4 and TLE3. Interacts with DDIT3/CHOP. The CTNNB1 and TCF7L2/TCF4 complex interacts with PML (isoform PML-4). Identified in a complex with CTNNB1 and FERMT2. Interacts with SPIN1. Interacts with C11orf84/SPINDOC in a SPIN1-dependent manner. Interacts with DAZAP2; the interaction results in localization of DAZAP2 to the nucleus. In terms of processing, in vitro, phosphorylated by TNIK. Post-translationally, phosphorylated at Thr-201 and/or Thr-212 by NLK. Phosphorylation by NLK at these sites inhibits DNA-binding by TCF7L2/TCF4, thereby preventing transcriptional activation of target genes of the canonical Wnt/beta-catenin signaling pathway. Polysumoylated. Sumoylation is enhanced by PIAS family members and desumoylation is enhanced by SENP2. Sumoylation/desumoylation regulates TCF7L2/TCF4 transcription activity in the Wnt/beta-catenin signaling pathway without altering interaction with CTNNB1 nor binding to DNA. In terms of tissue distribution, detected in epithelium from small intestine, with the highest expression at the top of the crypts and a gradient of expression from crypt to villus. Detected in colon epithelium and colon cancer, and in epithelium from mammary gland and carcinomas derived therefrom.

The protein resides in the nucleus. It localises to the PML body. Its function is as follows. Participates in the Wnt signaling pathway and modulates MYC expression by binding to its promoter in a sequence-specific manner. Acts as a repressor in the absence of CTNNB1, and as activator in its presence. Activates transcription from promoters with several copies of the Tcf motif 5'-CCTTTGATC-3' in the presence of CTNNB1. TLE1, TLE2, TLE3 and TLE4 repress transactivation mediated by TCF7L2/TCF4 and CTNNB1. Expression of dominant-negative mutants results in cell-cycle arrest in G1. Necessary for the maintenance of the epithelial stem-cell compartment of the small intestine. This is Transcription factor 7-like 2 (TCF7L2) from Homo sapiens (Human).